The following is a 185-amino-acid chain: Ribosome-recycling factor (185 aa).

This sequence belongs to the RRF family.

The protein resides in the cytoplasm. In terms of biological role, responsible for the release of ribosomes from messenger RNA at the termination of protein biosynthesis. May increase the efficiency of translation by recycling ribosomes from one round of translation to another. This is Ribosome-recycling factor from Alteromonas mediterranea (strain DSM 17117 / CIP 110805 / LMG 28347 / Deep ecotype).